A 442-amino-acid chain; its full sequence is Kelch domain-containing protein 10 (442 aa).

A disordered region spans residues 1–57 (MSAAQGWDRNRRRGGGAAGAGGGGSGAGGGSGGSGGRGTGQLNRFVQLSGRPHLPGK). Arginine 13 carries the post-translational modification Omega-N-methylarginine. Residues 15 to 39 (GGAAGAGGGGSGAGGGSGGSGGRGT) are compositionally biased toward gly residues. Kelch repeat units follow at residues 87 to 154 (RPPP…PREL), 155 to 198 (ASMS…ALLS), 199 to 260 (CRGK…PEER), 261 to 319 (YRHE…RRCH), 320 to 364 (SCVQ…PEPV), and 365 to 403 (YFHC…LVVP). Residues 401–442 (VVPSLLELAWEKLLAAFPNLANLSRTQLLHLGLTQGLIERLK) are interaction with CUL2.

The protein belongs to the KLHDC10 family. Component of a CRL2 E3 ubiquitin-protein ligase complex, also named ECS (Elongin BC-CUL2/5-SOCS-box protein) complex, composed of CUL2, Elongin BC (ELOB and ELOC), RBX1 and substrate-specific adapter KLHDC10. Interacts (via the 6 Kelch repeats) with PPP5C.

Its subcellular location is the nucleus. The protein localises to the cytoplasm. Its pathway is protein modification; protein ubiquitination. Its function is as follows. Substrate-recognition component of a Cul2-RING (CRL2) E3 ubiquitin-protein ligase complex of the DesCEND (destruction via C-end degrons) pathway, which recognizes a C-degron located at the extreme C-terminus of target proteins, leading to their ubiquitination and degradation. The C-degron recognized by the DesCEND pathway is usually a motif of less than ten residues and can be present in full-length proteins, truncated proteins or proteolytically cleaved forms. The CRL2(KLHDC10) complex specifically recognizes proteins with a proline-glycine (Pro-Gly) or an alanine tail (CAT tail) at the C-terminus, leading to their ubiquitination and degradation. The CRL2(KLHDC10) complex is involved in the ribosome-associated quality control (RQC) pathway, which mediates the extraction of incompletely synthesized nascent chains from stalled ribosomes: CRL2(KLHDC10) acts downstream of NEMF and recognizes CAT tails associated with stalled nascent chains, leading to their ubiquitination and degradation. Participates in the oxidative stress-induced cell death through MAP3K5 activation. Inhibits PPP5C phosphatase activity on MAP3K5. Acts as a regulator of necroptosis. This Homo sapiens (Human) protein is Kelch domain-containing protein 10.